The following is a 386-amino-acid chain: uncharacterized protein (386 aa).

A run of 12 helical transmembrane segments spans residues 8 to 28, 43 to 63, 79 to 99, 102 to 122, 134 to 154, 156 to 176, 216 to 236, 241 to 261, 272 to 292, 297 to 317, 342 to 362, and 365 to 385; these read VFVI…IAPI, IGLI…PVGV, FFYG…GFLI, IFTG…IAAI, IFNS…GILA, MYGI…AAII, FIIN…LALY, NITI…MALL, LGNI…YLLS, FLTI…SSTA, INIG…ILGI, and MYKF…LRIE.

Belongs to the major facilitator superfamily.

The protein localises to the cell membrane. This is an uncharacterized protein from Methanocaldococcus jannaschii (strain ATCC 43067 / DSM 2661 / JAL-1 / JCM 10045 / NBRC 100440) (Methanococcus jannaschii).